The sequence spans 331 residues: tRNA-cytidine(32) 2-sulfurtransferase (331 aa).

A PP-loop motif motif is present at residues 71–76 (SGGKDS). Cysteine 146, cysteine 149, and cysteine 237 together coordinate [4Fe-4S] cluster.

It belongs to the TtcA family. Homodimer. Mg(2+) serves as cofactor. The cofactor is [4Fe-4S] cluster.

It localises to the cytoplasm. The enzyme catalyses cytidine(32) in tRNA + S-sulfanyl-L-cysteinyl-[cysteine desulfurase] + AH2 + ATP = 2-thiocytidine(32) in tRNA + L-cysteinyl-[cysteine desulfurase] + A + AMP + diphosphate + H(+). Its pathway is tRNA modification. Catalyzes the ATP-dependent 2-thiolation of cytidine in position 32 of tRNA, to form 2-thiocytidine (s(2)C32). The sulfur atoms are provided by the cysteine/cysteine desulfurase (IscS) system. In Burkholderia multivorans (strain ATCC 17616 / 249), this protein is tRNA-cytidine(32) 2-sulfurtransferase.